The following is a 471-amino-acid chain: Putative multidrug resistance protein MdtD (471 aa).

Residues 1 to 11 (MTDLPDSTRWQ) are Periplasmic-facing. A helical transmembrane segment spans residues 12–32 (LWIVAFGFFMQSLDTTIVNTA). The Cytoplasmic portion of the chain corresponds to 33-48 (LPSMAQSLGESPLHMH). A helical membrane pass occupies residues 49-69 (MVIVSYVLTVAVMLPASGWLA). At 70 to 76 (DKVGVRN) the chain is on the periplasmic side. Residues 77–97 (IFFTAIVLFTLGSLFCALSGT) form a helical membrane-spanning segment. Residues 98–101 (LNEL) lie on the Cytoplasmic side of the membrane. A helical transmembrane segment spans residues 102-124 (LLARALQGVGGAMMVPVGRLTVM). At 125-137 (KIVPREQYMAAMT) the chain is on the periplasmic side. Residues 138–158 (FVTLPGQVGPLLGPALGGLLV) form a helical membrane-spanning segment. Residues 159-164 (EYASWH) are Cytoplasmic-facing. Residues 165 to 185 (WIFLINIPVGIIGAIATLMLM) traverse the membrane as a helical segment. Topologically, residues 186–196 (PNYTMQTRRFD) are periplasmic. The chain crosses the membrane as a helical span at residues 197–217 (LSGFLLLAVGMAVLTLALDGS). The Cytoplasmic segment spans residues 218-224 (KGTGLSP). The helical transmembrane segment at 225 to 245 (LAIAGLVAVGVVALVLYLLHA) threads the bilayer. The Periplasmic segment spans residues 246–262 (RNNNRALFSLKLFRTRT). The helical transmembrane segment at 263 to 283 (FSLGLAGSFAGRIGSGMLPFM) threads the bilayer. Topologically, residues 284–285 (TP) are cytoplasmic. The chain crosses the membrane as a helical span at residues 286 to 306 (VFLQIGLGFSPFHAGLMMIPM). Residues 307 to 341 (VLGSMGMKRIVVQVVNRFGYRRVLVATTLGLSLVT) are Periplasmic-facing. Residues 342–362 (LLFMTTALLGWYYVLPFVLFL) traverse the membrane as a helical segment. Over 363-395 (QGMVNSTRFSSMNTLTLKDLPDNLASSGNSLLS) the chain is Cytoplasmic. Residues 396–416 (MIMQLSMSIGVTIAGLLLGLF) form a helical membrane-spanning segment. At 417 to 430 (GSQHVSIDSGTTQT) the chain is on the periplasmic side. Residues 431–451 (VFMYTWLSMALIIALPAFIFA) form a helical membrane-spanning segment. Residues 452 to 471 (RVPNDTHQNVAISRRKRSAQ) lie on the Cytoplasmic side of the membrane.

Belongs to the major facilitator superfamily. TCR/Tet family.

The protein localises to the cell inner membrane. This is Putative multidrug resistance protein MdtD from Escherichia coli (strain 55989 / EAEC).